An 87-amino-acid polypeptide reads, in one-letter code: Cell division topological specificity factor (87 aa).

This sequence belongs to the MinE family.

In terms of biological role, prevents the cell division inhibition by proteins MinC and MinD at internal division sites while permitting inhibition at polar sites. This ensures cell division at the proper site by restricting the formation of a division septum at the midpoint of the long axis of the cell. In Aliivibrio fischeri (strain ATCC 700601 / ES114) (Vibrio fischeri), this protein is Cell division topological specificity factor.